The primary structure comprises 172 residues: Translation initiation factor IF-3 (172 aa).

The protein belongs to the IF-3 family. In terms of assembly, monomer.

The protein localises to the cytoplasm. Its function is as follows. IF-3 binds to the 30S ribosomal subunit and shifts the equilibrium between 70S ribosomes and their 50S and 30S subunits in favor of the free subunits, thus enhancing the availability of 30S subunits on which protein synthesis initiation begins. The sequence is that of Translation initiation factor IF-3 from Thermotoga maritima (strain ATCC 43589 / DSM 3109 / JCM 10099 / NBRC 100826 / MSB8).